Consider the following 349-residue polypeptide: uncharacterized protein (349 aa).

Residues Asn51–Gln160 form the THUMP domain.

This is an uncharacterized protein from Methanocaldococcus jannaschii (strain ATCC 43067 / DSM 2661 / JAL-1 / JCM 10045 / NBRC 100440) (Methanococcus jannaschii).